A 517-amino-acid chain; its full sequence is Dermokine (517 aa).

The signal sequence occupies residues 1–21 (MKLQGSLACLLLALCLGGGAA). 2 disordered regions span residues 51 to 83 (VGQG…MGSR) and 123 to 364 (AGSW…IQKE). Composition is skewed to gly residues over residues 127 to 145 (GTSG…GVQG) and 167 to 176 (GSVGQGGNGG). Residues 197–206 (RGNNQNSGCT) show a composition bias toward polar residues. The span at 212 to 235 (GSHESFSNSGGSSNDGSRGSQGSH) shows a compositional bias: low complexity. The segment covering 236–250 (GSNGQGSSGRGGGQG) has biased composition (gly residues). Positions 251–289 (NSDNNGSSSSSSGSNSGNSNSGNSGNSNSGNSGNSGSGS) are enriched in low complexity. Composition is skewed to gly residues over residues 308-332 (GSRG…GGGN) and 347-358 (GGSGSQGHGSNG).

It belongs to the dermokine family. In terms of assembly, homooligomer. Seems to be able to homodimerize and homotrimerize. O-glycosylated. As to expression, highly expressed in stratified epithelia; such as the skin, tongue, esophagus, forestomach and vagina. Also found in lung, trachea and urinary bladder.

It localises to the secreted. Its function is as follows. May act as a soluble regulator of keratinocyte differentiation. The polypeptide is Dermokine (Dmkn) (Mus musculus (Mouse)).